Consider the following 62-residue polypeptide: Amolopin-p-MT1 (62 aa).

An N-terminal signal peptide occupies residues 1–22 (MFTLKKSLLLLFFLGTISLSLC). Positions 23 to 42 (EQERGADEEENGGEVTEEEV) are cleaved as a propeptide — removed in mature form.

The protein belongs to the frog skin active peptide (FSAP) family. Brevinin subfamily. In terms of tissue distribution, expressed by the skin glands.

The protein localises to the secreted. Its function is as follows. Antimicrobial peptide. Active against a variety of Gram-negative and Gram-positive bacterial strains. Not active against fungi. Shows weak hemolytic activity against human erythrocytes. The sequence is that of Amolopin-p-MT1 from Amolops mantzorum (Sichuan torrent frog).